A 259-amino-acid chain; its full sequence is Aminoglycoside 3'-phosphotransferase (259 aa).

The active-site Proton acceptor is the Asp187.

It belongs to the aminoglycoside phosphotransferase family.

It carries out the reaction kanamycin A + ATP = kanamycin 3'-phosphate + ADP + H(+). In terms of biological role, resistance to kanamycin and structurally-related aminoglycosides, including amikacin. This chain is Aminoglycoside 3'-phosphotransferase (aphA-6), found in Acinetobacter baumannii.